Reading from the N-terminus, the 149-residue chain is Calmodulin-1 (149 aa).

Ala-2 is modified (N-acetylalanine). EF-hand domains are found at residues 8–43, 44–79, 81–116, and 117–149; these read EQIA…LGQN, PTEA…KMKD, DSEE…LGEK, and LTDE…MTAK. Asp-21 serves as a coordination point for Ca(2+). N6-acetyllysine; alternate is present on Lys-22. Residue Lys-22 forms a Glycyl lysine isopeptide (Lys-Gly) (interchain with G-Cter in SUMO2); alternate linkage. A Glycyl lysine isopeptide (Lys-Gly) (interchain with G-Cter in ubiquitin); alternate cross-link involves residue Lys-22. Ca(2+)-binding residues include Asp-23, Asp-25, Thr-27, and Glu-32. Thr-45 carries the post-translational modification Phosphothreonine; by CaMK4. Positions 57, 59, 61, 63, and 68 each coordinate Ca(2+). The tract at residues 77–149 is necessary and sufficient for interaction with PCP4; it reads MKDTDSEEEI…EEFVQMMTAK (73 aa). The residue at position 82 (Ser-82) is a Phosphoserine. Residue Asp-94 participates in Ca(2+) binding. At Lys-95 the chain carries N6-acetyllysine. 3 residues coordinate Ca(2+): Asp-96, Asn-98, and Tyr-100. A Phosphotyrosine modification is found at Tyr-100. Ser-102 is modified (phosphoserine). Position 105 (Glu-105) interacts with Ca(2+). Thr-111 bears the Phosphothreonine mark. Lys-116 carries the N6,N6,N6-trimethyllysine; alternate modification. Lys-116 carries the post-translational modification N6-methyllysine; alternate. 4 residues coordinate Ca(2+): Asp-130, Asp-132, Asp-134, and Gln-136. Phosphotyrosine is present on Tyr-139. Residue Glu-141 participates in Ca(2+) binding.

The protein belongs to the calmodulin family. Homotetramer. Interacts with MYO1C, MYO5A and RRAD. Interacts with MYO10. Interacts with CEP97, CCP110, TTN/titin and SRY. Interacts with USP6; the interaction is calcium dependent. Interacts with CDK5RAP2. Interacts with SCN5A. Interacts with RYR1. Interacts with FCHO1. Interacts with MIP in a 1:2 stoichiometry; the interaction with the cytoplasmic domains from two MIP subunits promotes MIP water channel closure. Interacts with ORAI1; this may play a role in the regulation of ORAI1-mediated calcium transport. Interacts with IQCF1. Interacts with SYT7. Interacts with CEACAM1 (via cytoplasmic domain); this interaction is in a calcium dependent manner and reduces homophilic cell adhesion through dissociation of dimer. Interacts with RYR2; regulates RYR2 calcium-release channel activity. Interacts with PCP4; regulates calmodulin calcium-binding. Interacts with the heterotetrameric KCNQ2 and KCNQ3 channel; the interaction is calcium-independent, constitutive and participates in the proper assembly of a functional heterotetrameric M channel. Interacts with alpha-synuclein/SNCA. Interacts with SLC9A1 in a calcium-dependent manner. In the absence of Ca(+2), interacts with GIMAP4 (via IQ domain). Interacts with SCN8A; the interaction modulates the inactivation rate of SCN8A. Interaction with KIF1A; the interaction is increased in presence of calcium and increases neuronal dense core vesicles motility. Interacts with KCNN3. Interacts with KCNQ1 (via C-terminus); forms a heterooctameric structure (with 4:4 KCNQ1:CALM stoichiometry) in a calcium-independent manner. Interacts with PIK3C3; the interaction modulates PIK3C3 kinase activity. Interacts with HINT1; interaction increases in the presence of calcium ions. Interacts with HINT3. Interacts with GARIN2; in mature sperm flagella. Interacts with IQUB. Interacts with SLC26A5 (via STAS domain); this interaction is calcium-dependent and the STAS domain interacts with only one lobe of CALM which is an elongated conformation. Ca(2+)-bound CALM1 binds CNGA1:CNGB1 channel (via CaM1 and CaM2 regions); this interaction modulates the affinity of the channel for cNMPs in response to intracellular Ca(2+) levels. Interacts with ITPR1; this interaction inhibits inositol 1,4,5 trisphosphate binding in both the presence and absence of calcium and 1,4,5 trisphosphate-induced calcium release in the presence of calcium. Component of the SIFI complex. Interacts with KCNN4; this interaction allows channel opening. Interacts with KCNN2; this interaction regulates the channel activity through calcium-binding. In terms of assembly, (Microbial infection) Interacts with Rubella virus protease/methyltransferase p150. As to quaternary structure, (Microbial infection) Interacts with Legionella pneumophila glutamylase SidJ. (Microbial infection) Interacts with C.violaceum CopC. C.violaceum CopC interacts specifically with the apo form of calmodulin. In terms of assembly, (Microbial infection) Interacts with S.flexneri OspC1 and OspC3. S.flexneri OspC1 and OspC3 interact specifically with the apo form of calmodulin and prevents calcium-binding. Ubiquitination results in a strongly decreased activity. In terms of processing, phosphorylation results in a decreased activity.

Its subcellular location is the cytoplasm. The protein localises to the cytoskeleton. It is found in the spindle. The protein resides in the spindle pole. It localises to the microtubule organizing center. Its subcellular location is the centrosome. The protein localises to the cell projection. It is found in the cilium. The protein resides in the flagellum. (Microbial infection) Inactivated by S.flexneri OspC1 and OspC3 proteins, which specifically bind the apo-form of calmodulin, thereby preventing calcium-binding and activity. Its function is as follows. Calmodulin acts as part of a calcium signal transduction pathway by mediating the control of a large number of enzymes, ion channels, aquaporins and other proteins through calcium-binding. Calcium-binding is required for the activation of calmodulin. Among the enzymes to be stimulated by the calmodulin-calcium complex are a number of protein kinases, such as myosin light-chain kinases and calmodulin-dependent protein kinase type II (CaMK2), and phosphatases. Together with CCP110 and centrin, is involved in a genetic pathway that regulates the centrosome cycle and progression through cytokinesis. Is a regulator of voltage-dependent L-type calcium channels. Mediates calcium-dependent inactivation of CACNA1C. Positively regulates calcium-activated potassium channel activity of KCNN2. Forms a potassium channel complex with KCNQ1 and regulates electrophysiological activity of the channel via calcium-binding. Acts as a sensor to modulate the endoplasmic reticulum contacts with other organelles mediated by VMP1:ATP2A2. In terms of biological role, (Microbial infection) Required for Legionella pneumophila SidJ glutamylase activity. (Microbial infection) Required for C.violaceum CopC and S.flexneri OspC3 arginine ADP-riboxanase activity. This chain is Calmodulin-1, found in Homo sapiens (Human).